A 132-amino-acid chain; its full sequence is Small ribosomal subunit protein uS8 (132 aa).

Belongs to the universal ribosomal protein uS8 family. As to quaternary structure, part of the 30S ribosomal subunit. Contacts proteins S5 and S12.

One of the primary rRNA binding proteins, it binds directly to 16S rRNA central domain where it helps coordinate assembly of the platform of the 30S subunit. The sequence is that of Small ribosomal subunit protein uS8 from Ehrlichia ruminantium (strain Welgevonden).